A 2385-amino-acid polypeptide reads, in one-letter code: Neuron navigator 3 (2385 aa).

Residues 17 to 38 (SKPVHTALPIPNLGTTGSQHCS) form a disordered region. A compositionally biased stretch (polar residues) spans 29–38 (LGTTGSQHCS). One can recognise a Calponin-homology (CH) domain in the interval 77 to 184 (KEDSKIYTDW…LFFSLSRYKQ (108 aa)). Residues 203–625 (VTHASPPSEA…LPQQQQHSHP (423 aa)) form a disordered region. Composition is skewed to polar residues over residues 210-243 (SEASQAKTQQDMQSSLAARYATQSNHSGIATSQK), 258-279 (GSSSKVQGASNLNRRSQSFNSI), and 297-316 (KGPQSSSGVNGNVQPPSTAG). The span at 318-329 (PPASAIPSPSAS) shows a compositional bias: low complexity. Residues 335-352 (KSMNVKHSATSTMLTVKQ) show a composition bias toward polar residues. Composition is skewed to low complexity over residues 353-363 (SSTATSPTPSS) and 427-439 (NSGLNSGGSTNSS). Positions 465 to 491 (PKEKEEKNRDKNKVCTEKPVKEEKDQV) are enriched in basic and acidic residues. Residues 521-535 (IPSSSGIPKPGSKVP) show a composition bias toward low complexity. Composition is skewed to polar residues over residues 537–548 (VKQTISPGSTAS), 557–567 (TKGSPSQSLSK), and 591–625 (ASPSGSCTMTVAQSSGQSTGNGAVQLPQQQQHSHP). Residues 679-707 (ETRRMRTVKNIADLRQNLEETMSSLRGTQ) adopt a coiled-coil conformation. Disordered regions lie at residues 877-1312 (ADSW…SPLF), 1351-1370 (SSSSAGSKDTPSYQSMTSLH), 1410-1468 (LSES…SAMS), 1650-1778 (GALN…KRQN), 1850-1881 (DRLKAETGNTAKPTRPPSESSSSTSSSSSRQS), and 2360-2385 (SSTQSCDSESTSHHEDILDSSLESTL). The span at 882–895 (DSSSVSSGLSDTLD) shows a compositional bias: low complexity. Residues 896–925 (NISTDDLNTTSSVSSYSNITVPSRKNTQLR) show a composition bias toward polar residues. Basic and acidic residues predominate over residues 942–959 (EELKKPEEDFDSHGDAGG). Over residues 979 to 988 (ASLSVSQTGS) the composition is skewed to polar residues. A compositionally biased stretch (basic and acidic residues) spans 1014–1026 (GKTDDAKASEKGK). Low complexity-rich tracts occupy residues 1074–1092 (GSSAMITSSGATITSGSAT) and 1157–1170 (SSTSSIDSNVSSKS). The segment covering 1187–1196 (GRSSPVTVNQ) has biased composition (polar residues). Low complexity-rich tracts occupy residues 1206–1226 (VSDSESVSLSGSPKSSPTSAS) and 1253–1263 (GAKAGGKSASA). The segment covering 1264–1289 (PNTEGVKSSSVMPSPSTTLARQGSLE) has biased composition (polar residues). Residues 1296 to 1305 (GSMGSAGGLS) show a composition bias toward gly residues. Basic and acidic residues predominate over residues 1436–1445 (NQEEGKEWLR). Residues 1446-1462 (SHSTGGLQDTGNQSPLV) are compositionally biased toward polar residues. A phosphoserine mark is found at Ser1459 and Ser1463. Residues 1562 to 1653 (AEEKAHSEQI…AQAAIQGALN (92 aa)) are a coiled coil. Low complexity predominate over residues 1672-1689 (SVSSINSATSHSSIGSGN). Polar residues predominate over residues 1701–1714 (WVNSRGSELRSSFK). A coiled-coil region spans residues 1794-1861 (EAEAEIILQL…LKAETGNTAK (68 aa)). A compositionally biased stretch (low complexity) spans 1867 to 1881 (SESSSSTSSSSSRQS).

It belongs to the Nav/unc-53 family. In terms of tissue distribution, highly expressed in brain. Expressed at low levels in heart and placenta. Present in activated T-cells but not in resting T-cells (at protein level). Down-regulated in primary neuroblastoma.

The protein resides in the nucleus outer membrane. Plays a role in cell migration. May be involved in neuron regeneration. May regulate IL2 production by T-cells. This chain is Neuron navigator 3 (NAV3), found in Homo sapiens (Human).